Reading from the N-terminus, the 89-residue chain is Small ribosomal subunit protein bS20 (89 aa).

The segment covering 1-12 (MANIKSAKKRVK) has biased composition (basic residues). Positions 1–20 (MANIKSAKKRVKQTVVRNER) are disordered.

This sequence belongs to the bacterial ribosomal protein bS20 family.

In terms of biological role, binds directly to 16S ribosomal RNA. This is Small ribosomal subunit protein bS20 from Xylella fastidiosa (strain 9a5c).